A 252-amino-acid polypeptide reads, in one-letter code: Adenosylcobinamide-GDP ribazoletransferase (252 aa).

7 consecutive transmembrane segments (helical) span residues 36-56, 59-79, 109-129, 133-153, 170-192, 199-218, and 228-248; these read LVPIVGLIIGGIMGVTYMLLV, FFYKISAVLVLIEYIFLTGGI, VGTNAVLAVISVIILNYVILT, PAYMVKVIILFPVAGRLGSIV, SFIDYCTLKELAIGIILYAVIFL, GYIIMIFPILTAVILIKYFT, and ILGAVCELNQTFYLMTVYAVL.

Belongs to the CobS family. Mg(2+) serves as cofactor.

It is found in the cell membrane. It carries out the reaction alpha-ribazole + adenosylcob(III)inamide-GDP = adenosylcob(III)alamin + GMP + H(+). The enzyme catalyses alpha-ribazole 5'-phosphate + adenosylcob(III)inamide-GDP = adenosylcob(III)alamin 5'-phosphate + GMP + H(+). It participates in cofactor biosynthesis; adenosylcobalamin biosynthesis; adenosylcobalamin from cob(II)yrinate a,c-diamide: step 7/7. Functionally, joins adenosylcobinamide-GDP and alpha-ribazole to generate adenosylcobalamin (Ado-cobalamin). Also synthesizes adenosylcobalamin 5'-phosphate from adenosylcobinamide-GDP and alpha-ribazole 5'-phosphate. This Clostridium acetobutylicum (strain ATCC 824 / DSM 792 / JCM 1419 / IAM 19013 / LMG 5710 / NBRC 13948 / NRRL B-527 / VKM B-1787 / 2291 / W) protein is Adenosylcobinamide-GDP ribazoletransferase.